A 167-amino-acid chain; its full sequence is NAD(P)H-quinone oxidoreductase subunit I, chloroplastic (167 aa).

2 consecutive 4Fe-4S ferredoxin-type domains span residues 55 to 84 (GRIH…VDWI) and 95 to 124 (KNYS…MTEE). Residues Cys-64, Cys-67, Cys-70, Cys-74, Cys-104, Cys-107, Cys-110, and Cys-114 each contribute to the [4Fe-4S] cluster site.

The protein belongs to the complex I 23 kDa subunit family. NDH is composed of at least 16 different subunits, 5 of which are encoded in the nucleus. [4Fe-4S] cluster is required as a cofactor.

It localises to the plastid. The protein localises to the chloroplast thylakoid membrane. The catalysed reaction is a plastoquinone + NADH + (n+1) H(+)(in) = a plastoquinol + NAD(+) + n H(+)(out). It carries out the reaction a plastoquinone + NADPH + (n+1) H(+)(in) = a plastoquinol + NADP(+) + n H(+)(out). In terms of biological role, NDH shuttles electrons from NAD(P)H:plastoquinone, via FMN and iron-sulfur (Fe-S) centers, to quinones in the photosynthetic chain and possibly in a chloroplast respiratory chain. The immediate electron acceptor for the enzyme in this species is believed to be plastoquinone. Couples the redox reaction to proton translocation, and thus conserves the redox energy in a proton gradient. The chain is NAD(P)H-quinone oxidoreductase subunit I, chloroplastic from Adiantum capillus-veneris (Maidenhair fern).